We begin with the raw amino-acid sequence, 294 residues long: Zinc finger protein 346 (294 aa).

Methionine 1 carries the post-translational modification N-acetylmethionine. Residues 1–19 (MECPAPDATDAADPGEAGP) show a composition bias toward low complexity. Residues 1-35 (MECPAPDATDAADPGEAGPYKGSEEPEGREPDGVR) form a disordered region. A compositionally biased stretch (basic and acidic residues) spans 22-35 (GSEEPEGREPDGVR). A Matrin-type 1 zinc finger spans residues 70 to 104 (FTSTQCKVCCAMLISESQKLAHYQSKKHANKVKRY). The Zn(2+) site is built by cysteine 75, cysteine 78, histidine 91, and histidine 97. Residue lysine 114 forms a Glycyl lysine isopeptide (Lys-Gly) (interchain with G-Cter in SUMO2) linkage. The Matrin-type 2 zinc-finger motif lies at 131–165 (DKNHCCPICNMTFSSPAVAQSHYLGKTHAKSLKLK). The Zn(2+) site is built by cysteine 136, cysteine 139, histidine 152, and histidine 158. Residue lysine 170 forms a Glycyl lysine isopeptide (Lys-Gly) (interchain with G-Cter in SUMO2) linkage. 2 Matrin-type zinc fingers span residues 182-216 (DPDK…ETKL) and 236-270 (GKGY…SPKT). A disordered region spans residues 269–294 (KTLVTLGSQTPVQTQPTPKDSSTVQD).

Forms a heteromeric complex with XPO5 and ILF3. Found in a nuclear export complex with XPO5, RAN, ILF3, ZNF346 and double-stranded RNA. Interacts with XPO5. Interacts with ILF3 in an RNA-independent manner. Expressed in all tissues tested, including heart, brain, spleen, lung, liver, muscle, kidney and testis. Exogenous expression induced apoptosis.

It is found in the nucleus. Its subcellular location is the nucleolus. The protein resides in the cytoplasm. Its function is as follows. Binds with low affinity to dsDNA and ssRNA, and with high affinity to dsRNA, with no detectable sequence specificity. May bind to specific miRNA hairpins. The chain is Zinc finger protein 346 (Znf346) from Mus musculus (Mouse).